The sequence spans 151 residues: NAD(P)H-quinone oxidoreductase subunit N (151 aa).

Belongs to the complex I NdhN subunit family. In terms of assembly, NDH-1 can be composed of about 15 different subunits; different subcomplexes with different compositions have been identified which probably have different functions.

Its subcellular location is the cellular thylakoid membrane. It catalyses the reaction a plastoquinone + NADH + (n+1) H(+)(in) = a plastoquinol + NAD(+) + n H(+)(out). The catalysed reaction is a plastoquinone + NADPH + (n+1) H(+)(in) = a plastoquinol + NADP(+) + n H(+)(out). NDH-1 shuttles electrons from an unknown electron donor, via FMN and iron-sulfur (Fe-S) centers, to quinones in the respiratory and/or the photosynthetic chain. The immediate electron acceptor for the enzyme in this species is believed to be plastoquinone. Couples the redox reaction to proton translocation, and thus conserves the redox energy in a proton gradient. Cyanobacterial NDH-1 also plays a role in inorganic carbon-concentration. This chain is NAD(P)H-quinone oxidoreductase subunit N, found in Acaryochloris marina (strain MBIC 11017).